Here is a 946-residue protein sequence, read N- to C-terminus: C-1-tetrahydrofolate synthase, cytoplasmic (946 aa).

Residues 2–319 are methylenetetrahydrofolate dehydrogenase and cyclohydrolase; it reads AGQVLDGKAC…PPLPLKLLTP (318 aa). Residues 51-55 and 98-100 each bind substrate; these read YVRMK and VQL. Residue 169-171 coordinates NADP(+); that stretch reads GRS. A Phosphoserine modification is found at Ser-176. An NADP(+)-binding site is contributed by Ser-194. 277-281 lines the substrate pocket; the sequence is PGGVG. Residue Thr-318 is modified to Phosphothreonine. The tract at residues 320–946 is formyltetrahydrofolate synthetase; it reads VPSDIDISRA…DDDGEIDGLF (627 aa). Ser-322 is modified (phosphoserine). 384 to 391 contributes to the ATP binding site; the sequence is TPLGEGKS.

It in the N-terminal section; belongs to the tetrahydrofolate dehydrogenase/cyclohydrolase family. In the C-terminal section; belongs to the formate--tetrahydrofolate ligase family. In terms of assembly, homodimer.

The protein localises to the cytoplasm. It localises to the nucleus. It carries out the reaction (6R)-5,10-methylene-5,6,7,8-tetrahydrofolate + NADP(+) = (6R)-5,10-methenyltetrahydrofolate + NADPH. It catalyses the reaction (6R)-5,10-methenyltetrahydrofolate + H2O = (6R)-10-formyltetrahydrofolate + H(+). The enzyme catalyses (6S)-5,6,7,8-tetrahydrofolate + formate + ATP = (6R)-10-formyltetrahydrofolate + ADP + phosphate. It participates in one-carbon metabolism; tetrahydrofolate interconversion. Functionally, cytoplasmic isozyme of C-1-tetrahydrofolate synthase. The trifunctional enzyme catalyzes the interconversion of the one-carbon derivatives of tetrahydrofolate (THF) between different oxidation states by the enzymatic activities 10-formyltetrahydrofolate synthetase, 5,lO-methenyltetrahydrofolate cyclohydrolase, and 5,lO-methylenetetrahydrofolate dehydrogenase. Involved in the generation of one-carbon intermediates in the biosynthesis of the purine bases. This is C-1-tetrahydrofolate synthase, cytoplasmic (ADE3) from Saccharomyces cerevisiae (strain ATCC 204508 / S288c) (Baker's yeast).